A 100-amino-acid chain; its full sequence is Cell division topological specificity factor (100 aa).

Belongs to the MinE family.

Prevents the cell division inhibition by proteins MinC and MinD at internal division sites while permitting inhibition at polar sites. This ensures cell division at the proper site by restricting the formation of a division septum at the midpoint of the long axis of the cell. This Blochmanniella floridana protein is Cell division topological specificity factor.